The chain runs to 250 residues: Cell division protein ZapD (250 aa).

Belongs to the ZapD family. In terms of assembly, interacts with FtsZ.

It localises to the cytoplasm. In terms of biological role, cell division factor that enhances FtsZ-ring assembly. Directly interacts with FtsZ and promotes bundling of FtsZ protofilaments, with a reduction in FtsZ GTPase activity. This chain is Cell division protein ZapD, found in Photorhabdus laumondii subsp. laumondii (strain DSM 15139 / CIP 105565 / TT01) (Photorhabdus luminescens subsp. laumondii).